A 363-amino-acid chain; its full sequence is UDP-N-acetylglucosamine--N-acetylmuramyl-(pentapeptide) pyrophosphoryl-undecaprenol N-acetylglucosamine transferase (363 aa).

Residues 21-23 (TGG), asparagine 129, arginine 170, serine 196, and glutamine 290 each bind UDP-N-acetyl-alpha-D-glucosamine.

The protein belongs to the glycosyltransferase 28 family. MurG subfamily.

The protein resides in the cell inner membrane. It catalyses the reaction di-trans,octa-cis-undecaprenyl diphospho-N-acetyl-alpha-D-muramoyl-L-alanyl-D-glutamyl-meso-2,6-diaminopimeloyl-D-alanyl-D-alanine + UDP-N-acetyl-alpha-D-glucosamine = di-trans,octa-cis-undecaprenyl diphospho-[N-acetyl-alpha-D-glucosaminyl-(1-&gt;4)]-N-acetyl-alpha-D-muramoyl-L-alanyl-D-glutamyl-meso-2,6-diaminopimeloyl-D-alanyl-D-alanine + UDP + H(+). It participates in cell wall biogenesis; peptidoglycan biosynthesis. Its function is as follows. Cell wall formation. Catalyzes the transfer of a GlcNAc subunit on undecaprenyl-pyrophosphoryl-MurNAc-pentapeptide (lipid intermediate I) to form undecaprenyl-pyrophosphoryl-MurNAc-(pentapeptide)GlcNAc (lipid intermediate II). The protein is UDP-N-acetylglucosamine--N-acetylmuramyl-(pentapeptide) pyrophosphoryl-undecaprenol N-acetylglucosamine transferase of Synechococcus sp. (strain ATCC 27144 / PCC 6301 / SAUG 1402/1) (Anacystis nidulans).